The following is a 583-amino-acid chain: Aspartyl protease APCB1 (583 aa).

A helical transmembrane segment spans residues 83–103; sequence LVLGLLGISLLAVAFYASVFP. Positions 203–564 constitute a Peptidase A1 domain; sequence YYTRILVGKP…DNVKRRIGWM (362 aa). Catalysis depends on residues Asp223 and Asp431.

It belongs to the peptidase A1 family. Interacts with BAG6 and BAGP1.

The protein localises to the membrane. Involved in proteolytic processing of BAG6 and plant basal immunity. This chain is Aspartyl protease APCB1, found in Arabidopsis thaliana (Mouse-ear cress).